A 109-amino-acid chain; its full sequence is Putative double-stranded DNA mimic protein YciU (109 aa).

This sequence belongs to the putative dsDNA mimic protein family.

Functionally, may act as a double-stranded DNA (dsDNA) mimic. Probably regulates the activity of a dsDNA-binding protein. The polypeptide is Putative double-stranded DNA mimic protein YciU (Shigella boydii serotype 18 (strain CDC 3083-94 / BS512)).